The chain runs to 208 residues: Large ribosomal subunit protein uL3 (208 aa).

Residues 117-147 (FQGVIKRHGQSRGPMAHGSRYHRRPGSMGPV) form a disordered region.

It belongs to the universal ribosomal protein uL3 family. In terms of assembly, part of the 50S ribosomal subunit. Forms a cluster with proteins L14 and L19.

One of the primary rRNA binding proteins, it binds directly near the 3'-end of the 23S rRNA, where it nucleates assembly of the 50S subunit. The chain is Large ribosomal subunit protein uL3 from Streptococcus equi subsp. zooepidemicus (strain H70).